Here is a 220-residue protein sequence, read N- to C-terminus: NADH-quinone oxidoreductase subunit I (220 aa).

4Fe-4S ferredoxin-type domains follow at residues 71-102 (LQRLLDSGSERCIGCGLCEKICTSNCIRIITH) and 112-141 (DSYTINLGRCIYCGLCAEVCPELAIVMGNR). The [4Fe-4S] cluster site is built by Cys-82, Cys-85, Cys-88, Cys-92, Cys-121, Cys-124, Cys-127, and Cys-131. Residues 187–220 (MQATPLDYVQEPSKEESQEETPTNPESNKGDENV) form a disordered region.

The protein belongs to the complex I 23 kDa subunit family. As to quaternary structure, NDH-1 is composed of 14 different subunits. Subunits NuoA, H, J, K, L, M, N constitute the membrane sector of the complex. [4Fe-4S] cluster is required as a cofactor.

It localises to the cell inner membrane. The catalysed reaction is a quinone + NADH + 5 H(+)(in) = a quinol + NAD(+) + 4 H(+)(out). Its function is as follows. NDH-1 shuttles electrons from NADH, via FMN and iron-sulfur (Fe-S) centers, to quinones in the respiratory chain. The immediate electron acceptor for the enzyme in this species is believed to be ubiquinone. Couples the redox reaction to proton translocation (for every two electrons transferred, four hydrogen ions are translocated across the cytoplasmic membrane), and thus conserves the redox energy in a proton gradient. In Helicobacter pylori (strain ATCC 700392 / 26695) (Campylobacter pylori), this protein is NADH-quinone oxidoreductase subunit I.